The sequence spans 263 residues: MTTAVGASQQLDEVGDRRGTGTEFANEIFAVVDVLNRESGLRRAVSDTGSETKARQGLIDAVFTSKVSPDCKELLDATTTCKWRSPAALTRALERQGVRAVLRGARQADRFEAVADELFHVSRLVRGQAALQVALGDPNRSVADRQELLMKLVGGQVSEETLVLARRAVVASDSTFEQVIDGYLHVAAEMADRRRAIVTTAKALTDAQRAEMVKQLERITGSPIELSEVVDPTVLGGALINLGDEVIDSTVAHRLDQARRELG.

It belongs to the ATPase delta chain family. As to quaternary structure, F-type ATPases have 2 components, F(1) - the catalytic core - and F(0) - the membrane proton channel. F(1) has five subunits: alpha(3), beta(3), gamma(1), delta(1), epsilon(1). F(0) has three main subunits: a(1), b(2) and c(10-14). The alpha and beta chains form an alternating ring which encloses part of the gamma chain. F(1) is attached to F(0) by a central stalk formed by the gamma and epsilon chains, while a peripheral stalk is formed by the delta and b chains.

Its subcellular location is the cell membrane. Its function is as follows. F(1)F(0) ATP synthase produces ATP from ADP in the presence of a proton or sodium gradient. F-type ATPases consist of two structural domains, F(1) containing the extramembraneous catalytic core and F(0) containing the membrane proton channel, linked together by a central stalk and a peripheral stalk. During catalysis, ATP synthesis in the catalytic domain of F(1) is coupled via a rotary mechanism of the central stalk subunits to proton translocation. This protein is part of the stalk that links CF(0) to CF(1). It either transmits conformational changes from CF(0) to CF(1) or is implicated in proton conduction. The chain is ATP synthase subunit delta from Cutibacterium acnes (strain DSM 16379 / KPA171202) (Propionibacterium acnes).